We begin with the raw amino-acid sequence, 195 residues long: Interferon tau (195 aa).

The N-terminal stretch at 1 to 23 (MAFVLSLLMALVLASYSPGGSLG) is a signal peptide. Disulfide bonds link Cys-24–Cys-122 and Cys-52–Cys-162.

It belongs to the alpha/beta interferon family. IFN-alphaII subfamily. As to expression, constitutively and exclusively expressed in the mononuclear cells of the extraembryonic trophectoderm.

It localises to the secreted. Its function is as follows. Paracrine hormone primarily responsible for maternal recognition of pregnancy. Interacts with endometrial receptors, probably type I interferon receptors, and blocks estrogen receptor expression, preventing the estrogen-induced increase in oxytocin receptor expression in the endometrium. This results in the suppression of the pulsatile endometrial release of the luteolytic hormone prostaglandin F2-alpha, hindering the regression of the corpus luteum (luteolysis) and therefore a return to ovarian cyclicity. This, and a possible direct effect of IFN-tau on prostaglandin synthesis, leads in turn to continued ovarian progesterone secretion, which stimulates the secretion by the endometrium of the nutrients required for the growth of the conceptus. In summary, displays particularly high antiviral and antiproliferative potency concurrently with particular weak cytotoxicity, high antiluteolytic activity and immunomodulatory properties. In contrast with other IFNs, IFN-tau is not virally inducible. This Cervus elaphus (Red deer) protein is Interferon tau (IFNT).